Here is a 1186-residue protein sequence, read N- to C-terminus: Chromosome partition protein Smc (1186 aa).

32–39 serves as a coordination point for ATP; it reads PNGSGKSN. Coiled coils occupy residues 167-206 and 259-481; these read VLKY…EPLK and SSAI…QAYQ. The SMC hinge domain maps to 519–637; that stretch reads GIRGAVLELI…EDLKGANELA (119 aa). Coiled coils occupy residues 672–864, 893–943, and 990–1029; these read LLGR…MSSS, RDQR…NLLQ, and SIDE…DEEM.

The protein belongs to the SMC family. As to quaternary structure, homodimer.

The protein resides in the cytoplasm. Its function is as follows. Required for chromosome condensation and partitioning. The protein is Chromosome partition protein Smc of Bacillus subtilis (strain 168).